We begin with the raw amino-acid sequence, 186 residues long: Large ribosomal subunit protein uL5 (186 aa).

It belongs to the universal ribosomal protein uL5 family. Part of the 50S ribosomal subunit; part of the 5S rRNA/L5/L18/L25 subcomplex. Contacts the 5S rRNA and the P site tRNA. Forms a bridge to the 30S subunit in the 70S ribosome.

Its function is as follows. This is one of the proteins that bind and probably mediate the attachment of the 5S RNA into the large ribosomal subunit, where it forms part of the central protuberance. In the 70S ribosome it contacts protein S13 of the 30S subunit (bridge B1b), connecting the 2 subunits; this bridge is implicated in subunit movement. Contacts the P site tRNA; the 5S rRNA and some of its associated proteins might help stabilize positioning of ribosome-bound tRNAs. The chain is Large ribosomal subunit protein uL5 from Cereibacter sphaeroides (strain ATCC 17029 / ATH 2.4.9) (Rhodobacter sphaeroides).